The sequence spans 752 residues: MEHIYQYSWIIPFVTLPVPMLIGAGLLLFPAATKKLRRMWAFPSVFLLSIVMIFSIDLSIQQINSSFIYQYIWSWTINNDFSLEFGHLIDPLTSILSVLITTVGILVLFYSDNYMSHDQGYLRFFAYMSFFTTSMLGLVTSSNLIQIYIFWELVGVCSYLLIGFWFTRPIASNACQKAFVTNRVGDFGLLLGILGLYWITGSFEFRDLFKIFNNLIYNNQVNFLFVTLCAVLLFSGAIAKSAQFPLHVWLPDAMEGPTPISALIHAATMVAAGIFLVARLFPLFVIIPFIMNLIALIGIITVFLGATLALAQKDIKRSLAYSTMSQLGYMMLALGMGSYRAALFHLITHAYSKALLFLGSGSIIHSMEAILGYSPDKSQNMVLMGGLTKHIPITKTAFLLGTLSLCGIPPFACFWSKDEILNDSWLYSPIFAIIACFTAGLTAFYMFRVYLLTFDGHFNAHFQSYSGKKNSSFYSISLWGKEGSKMLNKNLRLLALLTMNNKERASFFWKNTYQIDGNVRNMTWPFITIQNFNTKRIFSYPHESDNTMLFPMLILVLFTLFIGAIGIPFNQFNQEGMLLDIDILSKLLTPSLNLLHQNPENSVDWYEFVTNATFSASIAFFGIFIASFLYKPVYSSLQNLNFFNSFAKKGPKRILWDKIINVIYNWSSNRGYIDAFYAISFIGGIRKLAELIHFFDKQIIDGTPNGVGVTSFFVGEGIKNVGSGRISFYLLFYLFYALIFLLIYYSVYKFII.

Helical transmembrane passes span 9–29, 40–60, 89–109, 125–145, 147–167, 185–205, 219–239, 258–278, 280–300, 327–347, 354–374, 396–416, 425–445, 549–569, 608–628, and 728–748; these read WIIP…LLLF, WAFP…DLSI, IDPL…LVLF, FAYM…SNLI, IYIF…FWFT, GDFG…SFEF, NQVN…GAIA, TPIS…FLVA, LFPL…IGII, LGYM…FHLI, ALLF…LGYS, TAFL…CFWS, WLYS…TAFY, LFPM…GIPF, FVTN…IASF, and FYLL…YSVY.

Belongs to the complex I subunit 5 family. As to quaternary structure, NDH is composed of at least 16 different subunits, 5 of which are encoded in the nucleus.

Its subcellular location is the plastid. The protein localises to the chloroplast thylakoid membrane. It catalyses the reaction a plastoquinone + NADH + (n+1) H(+)(in) = a plastoquinol + NAD(+) + n H(+)(out). It carries out the reaction a plastoquinone + NADPH + (n+1) H(+)(in) = a plastoquinol + NADP(+) + n H(+)(out). NDH shuttles electrons from NAD(P)H:plastoquinone, via FMN and iron-sulfur (Fe-S) centers, to quinones in the photosynthetic chain and possibly in a chloroplast respiratory chain. The immediate electron acceptor for the enzyme in this species is believed to be plastoquinone. Couples the redox reaction to proton translocation, and thus conserves the redox energy in a proton gradient. The chain is NAD(P)H-quinone oxidoreductase subunit 5, chloroplastic (ndhF) from Manihot esculenta (Cassava).